The primary structure comprises 506 residues: MVSSTTPSSGEYLLEMSGINKSFPGVKALDNVNLKVRPHSIHALMGENGAGKSTLLKCLFGIYQKDSGTILFQGKEIDFHSAKEALENGISMVHQELNLVLQRSVMDNMWLGRYPTKGMFVDQDKMYRETKAIFDELDIDIDPRARVGTLSVSQMQMIEIAKAFSYNAKIVIMDEPTSSLTEKEVNHLFTIIRKLKERGCGIVYISHKMEEIFQLCDEVTVLRDGQWIATEPLAGLTMDKIIAMMVGRSLNQRFPDKENKPGEVILEVRNLTSLRQPSIRDVSFDLHKGEILGIAGLVGAKRTDIVETLFGIREKSAGTITLHGKQINNHNANEAINHGFALVTEERRSTGIYAYLDIGFNSLISNIRNYKNKVGLLDNSRMKSDTQWVIDSMRVKTPGHRTQIGSLSGGNQQKVIIGRWLLTQPEILMLDEPTRGIDVGAKFEIYQLIAELAKKGKGIIIISSEMPELLGITDRILVMSNGLVSGIVDTKTTTQNEILRLASLHL.

ABC transporter domains follow at residues 14–249 (LEMS…VGRS) and 264–506 (VILE…SLHL). 46–53 (GENGAGKS) lines the ATP pocket.

This sequence belongs to the ABC transporter superfamily. Galactose/methyl galactoside importer (TC 3.A.1.2.3) family. In terms of assembly, the complex is composed of one ATP-binding protein (MglA), two transmembrane proteins (MglC) and a solute-binding protein (MglB).

Its subcellular location is the cell inner membrane. The catalysed reaction is D-galactose(out) + ATP + H2O = D-galactose(in) + ADP + phosphate + H(+). The enzyme catalyses methyl beta-D-galactoside(out) + ATP + H2O = methyl beta-D-galactoside(in) + ADP + phosphate + H(+). Functionally, part of the ABC transporter complex MglABC involved in galactose/methyl galactoside import. Responsible for energy coupling to the transport system. This Escherichia coli (strain K12) protein is Galactose/methyl galactoside import ATP-binding protein MglA.